Consider the following 253-residue polypeptide: NAD-dependent protein deacetylase (253 aa).

Residues 3–253 enclose the Deacetylase sirtuin-type domain; that stretch reads APSLSSGVEQ…GETLGPFVGN (251 aa). NAD(+)-binding residues include alanine 29, threonine 33, phenylalanine 40, arginine 41, glutamine 106, isoleucine 108, aspartate 109, and histidine 126. Phenylalanine 40 contributes to the nicotinamide binding site. Nicotinamide is bound by residues isoleucine 108 and aspartate 109. Histidine 126 serves as the catalytic Proton acceptor. Cysteine 134, cysteine 137, cysteine 159, and cysteine 162 together coordinate Zn(2+). 5 residues coordinate NAD(+): serine 200, serine 201, asparagine 225, aspartate 242, and isoleucine 243.

This sequence belongs to the sirtuin family. Class U subfamily. It depends on Zn(2+) as a cofactor.

It is found in the cytoplasm. The enzyme catalyses N(6)-acetyl-L-lysyl-[protein] + NAD(+) + H2O = 2''-O-acetyl-ADP-D-ribose + nicotinamide + L-lysyl-[protein]. NAD-dependent protein deacetylase which modulates the activities of several enzymes which are inactive in their acetylated form. The protein is NAD-dependent protein deacetylase of Rhodopseudomonas palustris (strain ATCC BAA-98 / CGA009).